A 449-amino-acid polypeptide reads, in one-letter code: Glucose-6-phosphate isomerase (449 aa).

Catalysis depends on E291, which acts as the Proton donor. Active-site residues include H312 and K426.

It belongs to the GPI family.

The protein localises to the cytoplasm. The enzyme catalyses alpha-D-glucose 6-phosphate = beta-D-fructose 6-phosphate. Its pathway is carbohydrate biosynthesis; gluconeogenesis. The protein operates within carbohydrate degradation; glycolysis; D-glyceraldehyde 3-phosphate and glycerone phosphate from D-glucose: step 2/4. Its function is as follows. Catalyzes the reversible isomerization of glucose-6-phosphate to fructose-6-phosphate. This is Glucose-6-phosphate isomerase from Streptococcus pyogenes serotype M49 (strain NZ131).